Here is a 122-residue protein sequence, read N- to C-terminus: Small ribosomal subunit protein uS13 (122 aa).

The interval 94-122 (SLPVRGQRTKTNARTRKVHVSRSKNSRGK) is disordered.

This sequence belongs to the universal ribosomal protein uS13 family. As to quaternary structure, part of the 30S ribosomal subunit. Forms a loose heterodimer with protein S19. Forms two bridges to the 50S subunit in the 70S ribosome.

In terms of biological role, located at the top of the head of the 30S subunit, it contacts several helices of the 16S rRNA. In the 70S ribosome it contacts the 23S rRNA (bridge B1a) and protein L5 of the 50S subunit (bridge B1b), connecting the 2 subunits; these bridges are implicated in subunit movement. Contacts the tRNAs in the A and P-sites. The protein is Small ribosomal subunit protein uS13 of Haemophilus influenzae (strain ATCC 51907 / DSM 11121 / KW20 / Rd).